The chain runs to 638 residues: NBPF family member NBPF6 (638 aa).

Coiled coils occupy residues 10 to 43 (SERA…EKFL) and 69 to 115 (DSVL…KLRE). A disordered region spans residues 157 to 285 (HLVHKLSPEN…VPPRHHDKSN (129 aa)). Residues 165-179 (ENDEDEDEDEDDKDE) show a composition bias toward acidic residues. The Olduvai 1 domain occupies 174-261 (EDDKDEEVEK…EEEEALNIPP (88 aa)). A compositionally biased stretch (basic and acidic residues) spans 192-202 (EVQKTEEKEVP). Low complexity predominate over residues 214 to 226 (SNSHNPSNSNQPH). Composition is skewed to basic and acidic residues over residues 232–251 (TFKE…HPHD) and 264–273 (QNDHEEEEGK). 2 consecutive Olduvai domains span residues 326 to 399 (EKQS…ALVD) and 400 to 503 (KIKK…SQAQ). The segment at 563 to 584 (MKNPPQLEDDALEGSASNTQGR) is disordered.

The protein belongs to the NBPF family.

It localises to the cytoplasm. This is NBPF family member NBPF6 from Homo sapiens (Human).